The sequence spans 770 residues: Arf-GAP with coiled-coil, ANK repeat and PH domain-containing protein 2 (770 aa).

Positions 6-226 constitute a BAR domain; sequence DFEECLKDSP…MKDLGAQLDR (221 aa). The region spanning 266–361 is the PH domain; that stretch reads GIVMEGYLFK…WIKAVQTSIA (96 aa). Residues 371-392 are disordered; sequence SEKLDKKSSPSTGSLDSGSESK. Positions 379 to 388 are enriched in low complexity; it reads SPSTGSLDSG. Ser-384 and Ser-387 each carry phosphoserine. An Arf-GAP domain is found at 399-520; sequence ESALQRVQCI…KFVDKYSTLL (122 aa). The C4-type zinc-finger motif lies at 414-437; it reads CCDCGLADPRWASINLGITLCIEC. Ser-521 is subject to Phosphoserine. Over residues 548–561 the composition is skewed to polar residues; that stretch reads TPVKSNDSGIQQCS. The tract at residues 548–571 is disordered; the sequence is TPVKSNDSGIQQCSDDGRESLPST. Phosphoserine is present on residues Ser-573 and Ser-576. 3 ANK repeats span residues 632-661, 665-694, and 698-727; these read NQAT…NVNQ, QGRG…NQHA, and EGKD…NEEM. Tyr-734 bears the Phosphotyrosine mark. Ser-767 is modified (phosphoserine).

In terms of assembly, interacts with RAB35 (GTP-bound form); the interaction is direct and probably recruits ACAP2 to membranes. Interacts with MICALL1; the interaction is indirect through RAB35.

The protein localises to the endosome membrane. It localises to the cell membrane. Its activity is regulated as follows. GAP activity stimulated by phosphatidylinositol 4,5-bisphosphate (PIP2) and phosphatidic acid. GTPase-activating protein (GAP) for ADP ribosylation factor 6 (ARF6). Doesn't show GAP activity for RAB35. The chain is Arf-GAP with coiled-coil, ANK repeat and PH domain-containing protein 2 (Acap2) from Rattus norvegicus (Rat).